A 675-amino-acid polypeptide reads, in one-letter code: Protein REPRESSOR OF VERNALIZATION 1 (675 aa).

The interval 1–143 (MGRRRRFTQQ…DPVKVTGKGK (143 aa)) is disordered. Positions 22–31 (AEPPKTAKPA) are enriched in low complexity. Positions 48–70 (EEEDEDEEDELELEDEEDDEKDL) are enriched in acidic residues. Basic and acidic residues predominate over residues 71 to 86 (EEMRRNEEEERREETR). The Nuclear localization signal signature appears at 73–80 (MRRNEEEE). Residues 87 to 96 (TRRRRGRKPK) are compositionally biased toward basic residues. Residues 113-127 (SDEEEEEEVREEDST) show a composition bias toward acidic residues. In terms of domain architecture, BAH spans 157–275 (NTFELEDPVL…TVAKKLWNLT (119 aa)). Disordered stretches follow at residues 300–349 (ELPD…KPET), 493–512 (GLTPAEKTSEPEESRRLQMT), and 587–675 (LASP…ADHE). 3 stretches are compositionally biased toward basic and acidic residues: residues 333-346 (VSRDATGKSEHFVK), 499-512 (KTSEPEESRRLQMT), and 613-627 (KLEKQKSFTKPKPEE). Residues 372–518 (YRDKWLDKLL…LQMTDARCER (147 aa)) enclose the TFIIS central domain.

Expressed constitutively.

The protein localises to the nucleus. Its function is as follows. Component of a grass-specific mechanism of vernalization, a process by which prolonged cold exposure provides competence to flower in daylengths longer than 12 hours. Negative regulator of flowering required for vernalization establishment by repressing VRN1 before vernalization and in the fall season. The protein is Protein REPRESSOR OF VERNALIZATION 1 of Brachypodium distachyon (Purple false brome).